We begin with the raw amino-acid sequence, 247 residues long: tRNA pseudouridine synthase A (247 aa).

Residue Asp57 is the Nucleophile of the active site. Tyr115 provides a ligand contact to substrate.

It belongs to the tRNA pseudouridine synthase TruA family. Homodimer.

The enzyme catalyses uridine(38/39/40) in tRNA = pseudouridine(38/39/40) in tRNA. Functionally, formation of pseudouridine at positions 38, 39 and 40 in the anticodon stem and loop of transfer RNAs. In Chlorobaculum tepidum (strain ATCC 49652 / DSM 12025 / NBRC 103806 / TLS) (Chlorobium tepidum), this protein is tRNA pseudouridine synthase A.